Reading from the N-terminus, the 61-residue chain is Large ribosomal subunit protein eL20 (61 aa).

It belongs to the eukaryotic ribosomal protein eL20 family. In terms of assembly, part of the 50S ribosomal subunit. Binds 23S rRNA.

This Methanosarcina acetivorans (strain ATCC 35395 / DSM 2834 / JCM 12185 / C2A) protein is Large ribosomal subunit protein eL20.